The following is a 151-amino-acid chain: 3-hydroxyacyl-[acyl-carrier-protein] dehydratase FabZ (151 aa).

The active site involves His54.

The protein belongs to the thioester dehydratase family. FabZ subfamily.

The protein resides in the cytoplasm. The enzyme catalyses a (3R)-hydroxyacyl-[ACP] = a (2E)-enoyl-[ACP] + H2O. In terms of biological role, involved in unsaturated fatty acids biosynthesis. Catalyzes the dehydration of short chain beta-hydroxyacyl-ACPs and long chain saturated and unsaturated beta-hydroxyacyl-ACPs. In Pectobacterium atrosepticum (strain SCRI 1043 / ATCC BAA-672) (Erwinia carotovora subsp. atroseptica), this protein is 3-hydroxyacyl-[acyl-carrier-protein] dehydratase FabZ.